Here is a 484-residue protein sequence, read N- to C-terminus: UDP-N-acetylmuramate--L-alanine ligase (484 aa).

Residue 126 to 132 (GTHGKTT) coordinates ATP.

It belongs to the MurCDEF family.

It is found in the cytoplasm. It catalyses the reaction UDP-N-acetyl-alpha-D-muramate + L-alanine + ATP = UDP-N-acetyl-alpha-D-muramoyl-L-alanine + ADP + phosphate + H(+). It participates in cell wall biogenesis; peptidoglycan biosynthesis. In terms of biological role, cell wall formation. This is UDP-N-acetylmuramate--L-alanine ligase from Tolumonas auensis (strain DSM 9187 / NBRC 110442 / TA 4).